The primary structure comprises 281 residues: Pantothenate synthetase (281 aa).

29–36 (MGYLHEGH) serves as a coordination point for ATP. His-36 (proton donor) is an active-site residue. Gln-60 lines the (R)-pantoate pocket. A beta-alanine-binding site is contributed by Gln-60. 146-149 (GQKD) serves as a coordination point for ATP. (R)-pantoate is bound at residue Gln-152. Residues Val-175 and 183 to 186 (MSSR) contribute to the ATP site.

Belongs to the pantothenate synthetase family. Homodimer.

It is found in the cytoplasm. It carries out the reaction (R)-pantoate + beta-alanine + ATP = (R)-pantothenate + AMP + diphosphate + H(+). It functions in the pathway cofactor biosynthesis; (R)-pantothenate biosynthesis; (R)-pantothenate from (R)-pantoate and beta-alanine: step 1/1. Its function is as follows. Catalyzes the condensation of pantoate with beta-alanine in an ATP-dependent reaction via a pantoyl-adenylate intermediate. The polypeptide is Pantothenate synthetase (Pseudothermotoga lettingae (strain ATCC BAA-301 / DSM 14385 / NBRC 107922 / TMO) (Thermotoga lettingae)).